The primary structure comprises 37 residues: Large ribosomal subunit protein bL36 (37 aa).

It belongs to the bacterial ribosomal protein bL36 family.

The polypeptide is Large ribosomal subunit protein bL36 (Clostridium perfringens (strain ATCC 13124 / DSM 756 / JCM 1290 / NCIMB 6125 / NCTC 8237 / Type A)).